The chain runs to 87 residues: Translation initiation factor IF-1 2 (87 aa).

Residues 1–72 (MAKEELLELD…TKGRINFRHK (72 aa)) enclose the S1-like domain. Residues 68-87 (NFRHKDANSPRPPRSGQPRR) are disordered. Over residues 77-87 (PRPPRSGQPRR) the composition is skewed to pro residues.

This sequence belongs to the IF-1 family. Component of the 30S ribosomal translation pre-initiation complex which assembles on the 30S ribosome in the order IF-2 and IF-3, IF-1 and N-formylmethionyl-tRNA(fMet); mRNA recruitment can occur at any time during PIC assembly.

The protein localises to the cytoplasm. Functionally, one of the essential components for the initiation of protein synthesis. Stabilizes the binding of IF-2 and IF-3 on the 30S subunit to which N-formylmethionyl-tRNA(fMet) subsequently binds. Helps modulate mRNA selection, yielding the 30S pre-initiation complex (PIC). Upon addition of the 50S ribosomal subunit IF-1, IF-2 and IF-3 are released leaving the mature 70S translation initiation complex. In Burkholderia cenocepacia (strain HI2424), this protein is Translation initiation factor IF-1 2.